The primary structure comprises 246 residues: Ubiquinone biosynthesis O-methyltransferase (246 aa).

Residues Arg40, Gly70, Asp91, and Met135 each contribute to the S-adenosyl-L-methionine site.

The protein belongs to the methyltransferase superfamily. UbiG/COQ3 family.

The enzyme catalyses a 3-demethylubiquinol + S-adenosyl-L-methionine = a ubiquinol + S-adenosyl-L-homocysteine + H(+). It carries out the reaction a 3-(all-trans-polyprenyl)benzene-1,2-diol + S-adenosyl-L-methionine = a 2-methoxy-6-(all-trans-polyprenyl)phenol + S-adenosyl-L-homocysteine + H(+). The protein operates within cofactor biosynthesis; ubiquinone biosynthesis. In terms of biological role, O-methyltransferase that catalyzes the 2 O-methylation steps in the ubiquinone biosynthetic pathway. This Colwellia psychrerythraea (strain 34H / ATCC BAA-681) (Vibrio psychroerythus) protein is Ubiquinone biosynthesis O-methyltransferase.